We begin with the raw amino-acid sequence, 426 residues long: Serine--tRNA ligase (426 aa).

A disordered region spans residues 103–129 (VPNLPDDSVPTGKDENDNPEIRRWGTP). Basic and acidic residues predominate over residues 114 to 125 (GKDENDNPEIRR). 230–232 (TAE) contacts L-serine. ATP is bound at residue 261–263 (RSE). Residue Glu-284 participates in L-serine binding. 348–351 (EISS) contributes to the ATP binding site. An L-serine-binding site is contributed by Ser-384.

This sequence belongs to the class-II aminoacyl-tRNA synthetase family. Type-1 seryl-tRNA synthetase subfamily. In terms of assembly, homodimer. The tRNA molecule binds across the dimer.

Its subcellular location is the cytoplasm. It carries out the reaction tRNA(Ser) + L-serine + ATP = L-seryl-tRNA(Ser) + AMP + diphosphate + H(+). The enzyme catalyses tRNA(Sec) + L-serine + ATP = L-seryl-tRNA(Sec) + AMP + diphosphate + H(+). The protein operates within aminoacyl-tRNA biosynthesis; selenocysteinyl-tRNA(Sec) biosynthesis; L-seryl-tRNA(Sec) from L-serine and tRNA(Sec): step 1/1. Catalyzes the attachment of serine to tRNA(Ser). Is also able to aminoacylate tRNA(Sec) with serine, to form the misacylated tRNA L-seryl-tRNA(Sec), which will be further converted into selenocysteinyl-tRNA(Sec). In Dichelobacter nodosus (strain VCS1703A), this protein is Serine--tRNA ligase.